The following is a 561-amino-acid chain: DNA ligase B (561 aa).

The N6-AMP-lysine intermediate role is filled by lysine 125.

Belongs to the NAD-dependent DNA ligase family. LigB subfamily.

It catalyses the reaction NAD(+) + (deoxyribonucleotide)n-3'-hydroxyl + 5'-phospho-(deoxyribonucleotide)m = (deoxyribonucleotide)n+m + AMP + beta-nicotinamide D-nucleotide.. In terms of biological role, catalyzes the formation of phosphodiester linkages between 5'-phosphoryl and 3'-hydroxyl groups in double-stranded DNA using NAD as a coenzyme and as the energy source for the reaction. In Salmonella choleraesuis (strain SC-B67), this protein is DNA ligase B.